Consider the following 302-residue polypeptide: Oxygen-dependent coproporphyrinogen-III oxidase (302 aa).

Residue Ser90 coordinates substrate. Positions 94 and 104 each coordinate a divalent metal cation. His104 serves as the catalytic Proton donor. Asn106 to Arg108 serves as a coordination point for substrate. The a divalent metal cation site is built by His143 and His173. An important for dimerization region spans residues Tyr238 to Arg273.

The protein belongs to the aerobic coproporphyrinogen-III oxidase family. As to quaternary structure, homodimer. Requires a divalent metal cation as cofactor.

The protein localises to the cytoplasm. It carries out the reaction coproporphyrinogen III + O2 + 2 H(+) = protoporphyrinogen IX + 2 CO2 + 2 H2O. Its pathway is porphyrin-containing compound metabolism; protoporphyrin-IX biosynthesis; protoporphyrinogen-IX from coproporphyrinogen-III (O2 route): step 1/1. Functionally, involved in the heme biosynthesis. Catalyzes the aerobic oxidative decarboxylation of propionate groups of rings A and B of coproporphyrinogen-III to yield the vinyl groups in protoporphyrinogen-IX. The sequence is that of Oxygen-dependent coproporphyrinogen-III oxidase from Methylobacillus flagellatus (strain ATCC 51484 / DSM 6875 / VKM B-1610 / KT).